Consider the following 196-residue polypeptide: Ribosome maturation factor RimM (196 aa).

The 79-residue stretch at 118-196 (QGEYYWRDLI…EMTVDWDPDF (79 aa)) folds into the PRC barrel domain.

Belongs to the RimM family. Binds ribosomal protein uS19.

The protein resides in the cytoplasm. An accessory protein needed during the final step in the assembly of 30S ribosomal subunit, possibly for assembly of the head region. Essential for efficient processing of 16S rRNA. May be needed both before and after RbfA during the maturation of 16S rRNA. It has affinity for free ribosomal 30S subunits but not for 70S ribosomes. In Alcanivorax borkumensis (strain ATCC 700651 / DSM 11573 / NCIMB 13689 / SK2), this protein is Ribosome maturation factor RimM.